A 387-amino-acid chain; its full sequence is Phosphoglycerate kinase (387 aa).

Residues 21-23, Arg-36, 59-62, Arg-113, and Arg-146 contribute to the substrate site; these read DLN and HLGR. ATP-binding positions include Lys-197, Glu-314, and 340 to 343; that span reads GGDT.

Belongs to the phosphoglycerate kinase family. In terms of assembly, monomer.

Its subcellular location is the cytoplasm. The catalysed reaction is (2R)-3-phosphoglycerate + ATP = (2R)-3-phospho-glyceroyl phosphate + ADP. It participates in carbohydrate degradation; glycolysis; pyruvate from D-glyceraldehyde 3-phosphate: step 2/5. The sequence is that of Phosphoglycerate kinase from Aeromonas salmonicida (strain A449).